The chain runs to 1323 residues: MASDSPARSLDEIDLSALRDPAGIFELVELVGNGTYGQVYKGRHVKTGQLAAIKVMDVTGDEEEEIKQEINMLKKYSHHRNIATYYGAFIKKNPPGMDDQLWLVMEFCGAGSVTDLIKNTKGNTLKEEWIAYICREILRGLSHLHQHKVIHRDIKGQNVLLTENAEVKLVDFGVSAQLDRTVGRRNTFIGTPYWMAPEVIACDENPDATYDFKSDLWSLGITAIEMAEGAPPLCDMHPMRALFLIPRNPAPRLKSKKWSKKFQSFIESCLVKNHSQRPATEQLMKHPFIRDQPNERQVRIQLKDHIDRTKKKRGEKDETEYEYSGSEEEEEENDSGEPSSILNLPGESTLRRDFLRLQLANKERSEALRRQQLEQQQRENEEHKRQLLAERQKRIEEQKEQRRRLEEQQRREKELRKQQEREQRRHYEEQMRREEERRRAEHEQEYKRKQLEEQRQAERLQRQLKQERDYLVSLQHQRQEQRPLEKKPLYHYKEGMSPSEKPAWAKEVEERSRLNRQSSPAMPHKVANRISDPNLPPRSESFSISGVQPARTPPMLRPVDPQIPQLVAVKSQGPALTASQSVHEQPTKGLSGFQEALNVTSHRVEMPRQNSDPTSENPPLPTRIEKFDRSSWLRQEEDIPPKVPQRTTSISPALARKNSPGNGSALGPRLGSQPIRASNPDLRRTEPVLESSLQRTSSGSSSSSSTPSSQPSSQGGSQPGSQAGSSERSRVRANSKSEGSPVLPHEPSKVKPEESRDITRPSRPADLTALAKELRELRIEETNRPLKKVTDYSSSSEESESSEEEEEDGESETHDGTVAVSDIPRLIPTGAPGNNEQYNMGMVGTHGLETSHADTFGGSISREGTLMIRETAEEKKRSGHSDSNGFAGHINLPDLVQQSHSPAGTPTEGLGRVSTHSQEMDSGAEYGIGSSTKASFTPFVDPRVYQTSPTDEDEEDDESSAAALFTSELLRQEQAKLNEARKISVVNVNPTNIRPHSDTPEIRKYKKRFNSEILCAALWGVNLLVGTENGLMLLDRSGQGKVYNLINRRRFQQMDVLEGLNVLVTISGKKNKLRVYYLSWLRNRILHNDPEVEKKQGWITVGDLEGCIHYKVVKYERIKFLVIALKNAVEIYAWAPKPYHKFMAFKSFADLQHKPLLVDLTVEEGQRLKVIFGSHTGFHVIDVDSGNSYDIYIPSHIQGNITPHAIVILPKTDGMEMLVCYEDEGVYVNTYGRITKDVVLQWGEMPTSVAYIHSNQIMGWGEKAIEIRSVETGHLDGVFMHKRAQRLKFLCERNDKVFFASVRSGGSSQVFFMTLNRNSMMNW.

The Protein kinase domain occupies 25–289 (FELVELVGNG…TEQLMKHPFI (265 aa)). Residues 31–39 (VGNGTYGQV) and Lys-54 each bind ATP. Asp-153 serves as the catalytic Proton acceptor. A Phosphothreonine modification is found at Thr-187. 3 disordered regions span residues 284–347 (MKHP…LPGE), 397–559 (EQKE…LRPV), and 571–838 (SQGP…NEQY). The segment covering 288 to 307 (FIRDQPNERQVRIQLKDHID) has biased composition (basic and acidic residues). The tract at residues 290–1010 (RDQPNERQVR…EIRKYKKRFN (721 aa)) is mediates interaction with NEDD4. Over residues 317–335 (DETEYEYSGSEEEEEENDS) the composition is skewed to acidic residues. Ser-324 and Ser-326 each carry phosphoserine. Basic and acidic residues-rich tracts occupy residues 397 to 470 (EQKE…ERDY), 477 to 494 (QRQE…HYKE), and 503 to 513 (AWAKEVEERSR). 2 positions are modified to phosphoserine: Ser-531 and Ser-541. Thr-552 carries the post-translational modification Phosphothreonine. Phosphoserine is present on residues Ser-571, Ser-579, Ser-581, and Ser-611. Over residues 623-640 (RIEKFDRSSWLRQEEDIP) the composition is skewed to basic and acidic residues. Phosphoserine is present on residues Ser-649, Ser-651, Ser-659, Ser-672, Ser-678, Ser-691, Ser-735, Ser-737, and Ser-740. Low complexity predominate over residues 691-726 (SSLQRTSSGSSSSSSTPSSQPSSQGGSQPGSQAGSS). Composition is skewed to basic and acidic residues over residues 746-760 (EPSK…DITR) and 772-790 (KELR…KKVT). The segment covering 797–810 (EESESSEEEEEDGE) has biased composition (acidic residues). At Ser-922 the chain carries Phosphoserine. The tract at residues 939–960 (FVDPRVYQTSPTDEDEEDDESS) is disordered. Positions 950–959 (TDEDEEDDES) are enriched in acidic residues. The region spanning 1010-1297 (NSEILCAALW…KFLCERNDKV (288 aa)) is the CNH domain.

This sequence belongs to the protein kinase superfamily. STE Ser/Thr protein kinase family. STE20 subfamily. In terms of assembly, interacts (via the CNH domain) with RAP2A (GTP-bound form preferentially); the interaction is direct and required for the activation of TNIK by RAP2A. Interacts with NEDD4; recruits RAP2A to NEDD4. Interacts with TRAF2 and NCK. Interacts with TCF7L2/TCF4 and CTNNB1; the interaction is direct. Interacts with TANC1. Post-translationally, autophosphorylated. Autophosphorylation is activated by RAP2A and induces association to the cytoskeletal fraction.

The protein resides in the nucleus. Its subcellular location is the cytoplasm. The protein localises to the recycling endosome. It localises to the cytoskeleton. It catalyses the reaction L-seryl-[protein] + ATP = O-phospho-L-seryl-[protein] + ADP + H(+). The enzyme catalyses L-threonyl-[protein] + ATP = O-phospho-L-threonyl-[protein] + ADP + H(+). Serine/threonine kinase that acts as an essential activator of the Wnt signaling pathway. Recruited to promoters of Wnt target genes and required to activate their expression. May act by phosphorylating TCF4/TCF7L2. Appears to act upstream of the JUN N-terminal pathway. May play a role in the response to environmental stress. Part of a signaling complex composed of NEDD4, RAP2A and TNIK which regulates neuronal dendrite extension and arborization during development. More generally, it may play a role in cytoskeletal rearrangements and regulate cell spreading. Phosphorylates SMAD1 on Thr-322. Activator of the Hippo signaling pathway which plays a pivotal role in organ size control and tumor suppression by restricting proliferation and promoting apoptosis. MAP4Ks act in parallel to and are partially redundant with STK3/MST2 and STK4/MST2 in the phosphorylation and activation of LATS1/2, and establish MAP4Ks as components of the expanded Hippo pathway. This chain is Traf2 and NCK-interacting protein kinase (Tnik), found in Mus musculus (Mouse).